We begin with the raw amino-acid sequence, 301 residues long: Large ribosomal subunit protein uL18z (301 aa).

This sequence belongs to the universal ribosomal protein uL18 family. As to quaternary structure, component of the large ribosomal subunit (LSU). Expressed in seedlings, roots, stems, leaves, inflorescences and siliques.

The protein resides in the cytoplasm. It is found in the nucleus. Its subcellular location is the nucleolus. It localises to the nucleoplasm. In terms of biological role, component of the ribosome, a large ribonucleoprotein complex responsible for the synthesis of proteins in the cell. The small ribosomal subunit (SSU) binds messenger RNAs (mRNAs) and translates the encoded message by selecting cognate aminoacyl-transfer RNA (tRNA) molecules. The large subunit (LSU) contains the ribosomal catalytic site termed the peptidyl transferase center (PTC), which catalyzes the formation of peptide bonds, thereby polymerizing the amino acids delivered by tRNAs into a polypeptide chain. The nascent polypeptides leave the ribosome through a tunnel in the LSU and interact with protein factors that function in enzymatic processing, targeting, and the membrane insertion of nascent chains at the exit of the ribosomal tunnel. Seems involved in the regulation of cell proliferation. Essential in leaf polarity establishment, probably having a role for translation in leaf dorsoventral patterning to specify leaf adaxial identity. The chain is Large ribosomal subunit protein uL18z from Arabidopsis thaliana (Mouse-ear cress).